The chain runs to 360 residues: GTPase Obg (360 aa).

In terms of domain architecture, Obg spans 1–156; the sequence is MFVDSVEIII…KCVRLELKLI (156 aa). The OBG-type G domain maps to 157–360; it reads ADIGLVGFPN…LKFVLLKALQ (204 aa). Residues 163-170, 188-192, 210-213, 279-282, and 341-343 contribute to the GTP site; these read GFPNAGKS, FTTLV, DIPG, NKCD, and SAV. Mg(2+)-binding residues include serine 170 and threonine 190.

Belongs to the TRAFAC class OBG-HflX-like GTPase superfamily. OBG GTPase family. Monomer. Mg(2+) is required as a cofactor.

It is found in the cytoplasm. Its function is as follows. An essential GTPase which binds GTP, GDP and possibly (p)ppGpp with moderate affinity, with high nucleotide exchange rates and a fairly low GTP hydrolysis rate. Plays a role in control of the cell cycle, stress response, ribosome biogenesis and in those bacteria that undergo differentiation, in morphogenesis control. This Helicobacter pylori (strain J99 / ATCC 700824) (Campylobacter pylori J99) protein is GTPase Obg.